Consider the following 342-residue polypeptide: Farnesyl pyrophosphate synthase 2 (342 aa).

Residues Lys47, Arg50, and Gln86 each contribute to the isopentenyl diphosphate site. Positions 93 and 97 each coordinate Mg(2+). Arg102 contacts dimethylallyl diphosphate. Arg103 serves as a coordination point for isopentenyl diphosphate. Dimethylallyl diphosphate is bound by residues Lys190, Thr191, Gln229, Lys246, and Lys255.

Belongs to the FPP/GGPP synthase family. Mg(2+) serves as cofactor.

It localises to the cytoplasm. The catalysed reaction is isopentenyl diphosphate + dimethylallyl diphosphate = (2E)-geranyl diphosphate + diphosphate. The enzyme catalyses isopentenyl diphosphate + (2E)-geranyl diphosphate = (2E,6E)-farnesyl diphosphate + diphosphate. The protein operates within isoprenoid biosynthesis; farnesyl diphosphate biosynthesis; farnesyl diphosphate from geranyl diphosphate and isopentenyl diphosphate: step 1/1. Its pathway is isoprenoid biosynthesis; geranyl diphosphate biosynthesis; geranyl diphosphate from dimethylallyl diphosphate and isopentenyl diphosphate: step 1/1. Functionally, catalyzes the sequential condensation of isopentenyl pyrophosphate with the allylic pyrophosphates, dimethylallyl pyrophosphate, and then with the resultant geranylpyrophosphate to the ultimate product farnesyl pyrophosphate. This is Farnesyl pyrophosphate synthase 2 (FPS2) from Lupinus albus (White lupine).